Consider the following 241-residue polypeptide: Aliphatic sulfonates import ATP-binding protein SsuB (241 aa).

The 217-residue stretch at 10-226 (VHLHGFSRSF…RPDHPAFMQL (217 aa)) folds into the ABC transporter domain. ATP is bound at residue 42–49 (GESGSGKT).

This sequence belongs to the ABC transporter superfamily. Aliphatic sulfonates importer (TC 3.A.1.17.2) family. In terms of assembly, the complex is composed of two ATP-binding proteins (SsuB), two transmembrane proteins (SsuC) and a solute-binding protein (SsuA).

It localises to the cell inner membrane. The enzyme catalyses ATP + H2O + aliphatic sulfonate-[sulfonate-binding protein]Side 1 = ADP + phosphate + aliphatic sulfonateSide 2 + [sulfonate-binding protein]Side 1.. Part of the ABC transporter complex SsuABC involved in aliphatic sulfonates import. Responsible for energy coupling to the transport system. The protein is Aliphatic sulfonates import ATP-binding protein SsuB of Delftia acidovorans (Pseudomonas acidovorans).